The sequence spans 524 residues: Alkaline phosphatase, tissue-nonspecific isozyme (524 aa).

The N-terminal stretch at 1 to 17 (MISPFLVLAIGTCLTNS) is a signal peptide. D60 lines the Mg(2+) pocket. 2 residues coordinate Zn(2+): D60 and S110. The active-site Phosphoserine intermediate is S110. Phosphoserine is present on S110. C139 and C201 are oxidised to a cystine. N-linked (GlcNAc...) asparagine glycosylation occurs at N140. A Mg(2+)-binding site is contributed by T173. The N-linked (GlcNAc...) asparagine glycan is linked to N230. E235 is a binding site for Ca(2+). N-linked (GlcNAc...) asparagine glycosylation is present at N271. Ca(2+) contacts are provided by F290 and E291. A glycan (N-linked (GlcNAc...) asparagine) is linked at N303. Residue D306 participates in Ca(2+) binding. E332 serves as a coordination point for Mg(2+). The Zn(2+) site is built by D337, H341, D378, and H379. N430 carries an N-linked (GlcNAc...) asparagine glycan. Residue H454 participates in Zn(2+) binding. The cysteines at positions 489 and 497 are disulfide-linked. S501 carries GPI-anchor amidated serine lipidation. Positions 502 to 524 (SAGSLAAGPLLLALALYPLSVLF) are cleaved as a propeptide — removed in mature form.

It belongs to the alkaline phosphatase family. In terms of assembly, homodimer. Mg(2+) serves as cofactor. Requires Zn(2+) as cofactor. Ca(2+) is required as a cofactor. N-glycosylated.

The protein localises to the cell membrane. Its subcellular location is the extracellular vesicle membrane. It localises to the mitochondrion membrane. The protein resides in the mitochondrion intermembrane space. The enzyme catalyses a phosphate monoester + H2O = an alcohol + phosphate. It carries out the reaction diphosphate + H2O = 2 phosphate + H(+). The catalysed reaction is pyridoxal 5'-phosphate + H2O = pyridoxal + phosphate. It catalyses the reaction phosphoethanolamine + H2O = ethanolamine + phosphate. The enzyme catalyses N-phosphocreatine + H2O = creatine + phosphate. It carries out the reaction ATP + H2O = ADP + phosphate + H(+). The catalysed reaction is ADP + H2O = AMP + phosphate + H(+). It catalyses the reaction AMP + H2O = adenosine + phosphate. Its activity is regulated as follows. Phosphatase activity is specifically inhibited by 5-((5-chloro-2-methoxyphenyl)sulfonamido)nicotinamide (SBI-425). Its function is as follows. Alkaline phosphatase that metabolizes various phosphate compounds and plays a key role in skeletal mineralization and adaptive thermogenesis. Has broad substrate specificity and can hydrolyze a considerable variety of compounds: however, only a few substrates, such as diphosphate (inorganic pyrophosphate; PPi), pyridoxal 5'-phosphate (PLP) and N-phosphocreatine are natural substrates. Plays an essential role in skeletal and dental mineralization via its ability to hydrolyze extracellular diphosphate, a potent mineralization inhibitor, to phosphate: it thereby promotes hydroxyapatite crystal formation and increases inorganic phosphate concentration. Acts in a non-redundant manner with PHOSPHO1 in skeletal mineralization: while PHOSPHO1 mediates the initiation of hydroxyapatite crystallization in the matrix vesicles (MVs), ALPL/TNAP catalyzes the spread of hydroxyapatite crystallization in the extracellular matrix. Also promotes dephosphorylation of osteopontin (SSP1), an inhibitor of hydroxyapatite crystallization in its phosphorylated state; it is however unclear whether ALPL/TNAP mediates SSP1 dephosphorylation via a direct or indirect manner. Catalyzes dephosphorylation of PLP to pyridoxal (PL), the transportable form of vitamin B6, in order to provide a sufficient amount of PLP in the brain, an essential cofactor for enzymes catalyzing the synthesis of diverse neurotransmitters. Additionally, also able to mediate ATP degradation in a stepwise manner to adenosine, thereby regulating the availability of ligands for purinergic receptors. Also capable of dephosphorylating microbial products, such as lipopolysaccharides (LPS) as well as other phosphorylated small-molecules, such as poly-inosine:cytosine (poly I:C). Acts as a key regulator of adaptive thermogenesis as part of the futile creatine cycle: localizes to the mitochondria of thermogenic fat cells and acts by mediating hydrolysis of N-phosphocreatine to initiate a futile cycle of creatine dephosphorylation and phosphorylation. During the futile creatine cycle, creatine and N-phosphocreatine are in a futile cycle, which dissipates the high energy charge of N-phosphocreatine as heat without performing any mechanical or chemical work. The protein is Alkaline phosphatase, tissue-nonspecific isozyme of Homo sapiens (Human).